Consider the following 1068-residue polypeptide: MNSIKNVPARVLSRRPGHSLEAEREQFDKTQAISISKAINSQEAPVKEKHARRIILGTHHEKGAFTFWSYAIGLPLSSSSILSWKFCHVLHKVLRDGHPNVLHDYQRYRSNIREIGDLWGHLRDQYGHLVNIYTKLLLTKISFHLKHPQFPAGLEVTDEVLEKAAGTDVNNIFQLTVEMFDYMDCELKLSESVFRQLNTAIAVSQMSSGQCRLAPLIQVIQDCSHLYHYTVKLMFKLHSCLPADTLQGHRDRFHEQFHSLKNFFRRASDMLYFKRLIQIPRLPEGPPNFLRASALAEHIKPVVVIPEEAPEEEEPENLIEISSAPPAGEPVVVADLFDQTFGPPNGSMKDDRDLQIENLKREVETLRAELEKIKMEAQRYISQLKGQVNGLEAELEEQRKQKQKALVDNEQLRHELAQLKALQLEGARNQGLREEAERKASATEARYSKLKEKHSELINTHAELLRKNADTAKQLTVTQQSQEEVARVKEQLAFQMEQAKRESEMKMEEQSDQLEKLKRELAARAGELARAQEALSRTEQSGSELSSRLDTLNAEKEALSGVVRQREAELLAAQSLVREKEEALSQEQQRSSQEKGELRGQLAEKESQEQGLRQKLLDEQLAVLRSAAAEAEAILQDAVSKLDDPLHLRCTSSPDYLVSRAQAALDSVSGLEQGHTQYLASSEDASALVAALTRFSHLAADTIVNGAATSHLAPTDPADRLMDTCRECGARALELVGQLQDQTVLPRAQPSLMRAPLQGILQLGQDLKPKSLDVRQEELGAMVDKEMAATSAAIEDAVRRIEDMMSQARHESSGVKLEVNERILNSCTDLMKAIRLLVMTSTSLQKEIVESGRGAATQQEFYAKNSRWTEGLISASKAVGWGATQLVESADKVVLHMGKYEELIVCSHEIAASTAQLVAASKVKANKNSPHLSRLQECSRTVNERAANVVASTKSGQEQIEDRDTMDFSGLSLIKLKKQEMETQVRVLELEKTLEAERVRLGELRKQHYVLAGGMGTPSEEEPSRPSPAPRSGATKKPPLAQKPSIAPRTDNQLDKKDGVYPAQLVNY.

The residue at position 1 (Met-1) is an N-acetylmethionine. An ENTH domain is found at 23-151; the sequence is EREQFDKTQA…SFHLKHPQFP (129 aa). Residues 346-644 adopt a coiled-coil conformation; it reads GSMKDDRDLQ…LQDAVSKLDD (299 aa). The interval 582 to 610 is disordered; the sequence is EALSQEQQRSSQEKGELRGQLAEKESQEQ. Residues 592–608 show a composition bias toward basic and acidic residues; that stretch reads SQEKGELRGQLAEKESQ. The region spanning 771–1012 is the I/LWEQ domain; the sequence is SLDVRQEELG…ELRKQHYVLA (242 aa). Residues 867 to 924 are important for actin binding; it reads RWTEGLISASKAVGWGATQLVESADKVVLHMGKYEELIVCSHEIAASTAQLVAASKVK. The segment at 1011 to 1068 is disordered; sequence LAGGMGTPSEEEPSRPSPAPRSGATKKPPLAQKPSIAPRTDNQLDKKDGVYPAQLVNY.

The protein belongs to the SLA2 family. As to quaternary structure, homodimer. Interacts with actin; homodimerization promotes actin binding. Interacts with CLTB. Interacts with HIP1. Interacts (via ENTH and I/LWEQ domains) with BCL2L10. Widely expressed. Expressed at lower levels in skeletal muscle and heart. The level of expression does not change appreciably during development.

The protein localises to the cytoplasm. Its subcellular location is the perinuclear region. It localises to the endomembrane system. It is found in the cytoplasmic vesicle. The protein resides in the clathrin-coated vesicle membrane. In terms of biological role, component of clathrin-coated pits and vesicles, that may link the endocytic machinery to the actin cytoskeleton. Binds 3-phosphoinositides (via ENTH domain). May act through the ENTH domain to promote cell survival by stabilizing receptor tyrosine kinases following ligand-induced endocytosis. In Mus musculus (Mouse), this protein is Huntingtin-interacting protein 1-related protein (Hip1r).